The sequence spans 409 residues: MKLLYIFEKNIILRKILITFSLIIIFLLGRYVPIPGVLISAYKGQDNNFATLYSTVTGGNLSQVGVFSLGIGPMMTTMILLRLFTIGKYSSGVSQKVQQFRQNVVMLVIAIIQGLAIAISFQYHNGFSLTKLLLATMILVTGAYIISWIGNLNAEYGFGGMTILVVVGMLVGQFNNIPLIFELFQDGYQLAIILFLLWTLVAMYLMITFERSEYRIPVMRTSIHNRLVDDAYMPIKVNASGGMAFMYVYTLLMFPQYIIILLRSIFPTNPDITSYNDYFSLSSIQGVVIYMILMLVLSVAFTFVNIDPTKISEAMRESGDFIPNYRPGKETQSYLSKICYLFGTFSGFFMAFLGGVPLLFALGNDDLRTVSSMTGIFMMITGMSFMILDEFQVIRIRKQYTSVFENEEN.

10 helical membrane passes run 16 to 36 (ILIT…PIPG), 61 to 81 (LSQV…MILL), 104 to 124 (VVML…FQYH), 132 to 152 (LLLA…IGNL), 161 to 181 (MTIL…PLIF), 190 to 210 (LAII…ITFE), 242 to 262 (GMAF…IILL), 286 to 306 (GVVI…FVNI), 341 to 361 (LFGT…LLFA), and 374 to 394 (TGIF…FQVI).

This sequence belongs to the SecY/SEC61-alpha family. SecY2 subfamily. As to quaternary structure, component of the accessory SecA2/SecY2 protein translocase complex required to export cell wall proteins. May form heterotrimers with SecE and SecG subunits.

The protein resides in the cell membrane. Functionally, part of the accessory SecA2/SecY2 system specifically required for export of possible cell wall proteins. The central subunit of a protein translocation channel. The sequence is that of Accessory Sec system protein translocase subunit SecY2 from Streptococcus agalactiae serotype III (strain NEM316).